The primary structure comprises 117 residues: Large ribosomal subunit protein uL18 (117 aa).

It belongs to the universal ribosomal protein uL18 family. As to quaternary structure, part of the 50S ribosomal subunit; part of the 5S rRNA/L5/L18/L25 subcomplex. Contacts the 5S and 23S rRNAs.

Functionally, this is one of the proteins that bind and probably mediate the attachment of the 5S RNA into the large ribosomal subunit, where it forms part of the central protuberance. The polypeptide is Large ribosomal subunit protein uL18 (Klebsiella pneumoniae subsp. pneumoniae (strain ATCC 700721 / MGH 78578)).